Reading from the N-terminus, the 176-residue chain is NAD(P)H-quinone oxidoreductase subunit I, chloroplastic (176 aa).

4Fe-4S ferredoxin-type domains lie at 55 to 84 and 95 to 124; these read GRIH…VDWE and LNYS…MTEE. Residues Cys64, Cys67, Cys70, Cys74, Cys104, Cys107, Cys110, and Cys114 each coordinate [4Fe-4S] cluster.

This sequence belongs to the complex I 23 kDa subunit family. NDH is composed of at least 16 different subunits, 5 of which are encoded in the nucleus. It depends on [4Fe-4S] cluster as a cofactor.

The protein resides in the plastid. The protein localises to the chloroplast thylakoid membrane. It catalyses the reaction a plastoquinone + NADH + (n+1) H(+)(in) = a plastoquinol + NAD(+) + n H(+)(out). The enzyme catalyses a plastoquinone + NADPH + (n+1) H(+)(in) = a plastoquinol + NADP(+) + n H(+)(out). In terms of biological role, NDH shuttles electrons from NAD(P)H:plastoquinone, via FMN and iron-sulfur (Fe-S) centers, to quinones in the photosynthetic chain and possibly in a chloroplast respiratory chain. The immediate electron acceptor for the enzyme in this species is believed to be plastoquinone. Couples the redox reaction to proton translocation, and thus conserves the redox energy in a proton gradient. This chain is NAD(P)H-quinone oxidoreductase subunit I, chloroplastic, found in Populus alba (White poplar).